A 270-amino-acid polypeptide reads, in one-letter code: Large ribosomal subunit protein uL2c (270 aa).

Residues 221-245 are disordered; the sequence is NPIDHPHGGGEGRAPIGRNQPKTPW.

This sequence belongs to the universal ribosomal protein uL2 family. In terms of assembly, part of the 50S ribosomal subunit.

The protein resides in the plastid. The polypeptide is Large ribosomal subunit protein uL2c (rpl2) (Cuscuta gronovii (Common dodder)).